A 307-amino-acid polypeptide reads, in one-letter code: Taste receptor type 2 member 41 (307 aa).

The Extracellular segment spans residues 1–7 (MQAALTA). Residues 8 to 28 (FFMLLFSLLSLLGIAANGFIV) form a helical membrane-spanning segment. Residues 29 to 40 (LVLGREWLRYGR) are Cytoplasmic-facing. Residues 41-61 (LLPLDMILISLGASRFCLQLV) form a helical membrane-spanning segment. The Extracellular segment spans residues 62–88 (GTVHNFYYSAQKVEYSGGLGRQFFHLH). Residues 89-109 (WHFLNSATFWFCSWLSVLFCV) form a helical membrane-spanning segment. Residues 110-129 (KIANITHPTFLWLKWRFPAW) lie on the Cytoplasmic side of the membrane. A helical membrane pass occupies residues 130-150 (VPWLLLGSVLISFIITLLFFW). Topologically, residues 151–183 (VNYPAYQEFLIRKFSVNMTYKWNTRIETYYFPS) are extracellular. Asn167 is a glycosylation site (N-linked (GlcNAc...) asparagine). The chain crosses the membrane as a helical span at residues 184 to 204 (LKLVIWSIPFSVFLVSIMLLI). At 205–234 (NSLRRHTQRMQHNGHSLQDPSTQAHTRALK) the chain is on the cytoplasmic side. The chain crosses the membrane as a helical span at residues 235–255 (SLISFLILYALSFLSLIIDAT). The Extracellular portion of the chain corresponds to 256–264 (KFISMQNDF). Residues 265-285 (YWPWQIAVYLCISIHPFILIF) traverse the membrane as a helical segment. Residues 286 to 307 (SNLKLRSVFSQLLLLARGFWVA) are Cytoplasmic-facing.

It belongs to the G-protein coupled receptor T2R family.

Its subcellular location is the membrane. Functionally, receptor that may play a role in the perception of bitterness and is gustducin-linked. May play a role in sensing the chemical composition of the gastrointestinal content. The activity of this receptor may stimulate alpha gustducin, mediate PLC-beta-2 activation and lead to the gating of TRPM5. The polypeptide is Taste receptor type 2 member 41 (TAS2R41) (Pan paniscus (Pygmy chimpanzee)).